The chain runs to 476 residues: Glucose-1-phosphate adenylyltransferase (476 aa).

Alpha-D-glucose 1-phosphate-binding positions include Tyr-114, Gly-179, 194–195, and Ser-212; that span reads EK.

This sequence belongs to the bacterial/plant glucose-1-phosphate adenylyltransferase family. Homotetramer.

It catalyses the reaction alpha-D-glucose 1-phosphate + ATP + H(+) = ADP-alpha-D-glucose + diphosphate. The protein operates within glycan biosynthesis; glycogen biosynthesis. Functionally, involved in the biosynthesis of ADP-glucose, a building block required for the elongation reactions to produce glycogen. Catalyzes the reaction between ATP and alpha-D-glucose 1-phosphate (G1P) to produce pyrophosphate and ADP-Glc. In Yersinia pestis, this protein is Glucose-1-phosphate adenylyltransferase.